Consider the following 93-residue polypeptide: Large ribosomal subunit protein uL23cz/uL23cy (93 aa).

It belongs to the universal ribosomal protein uL23 family. In terms of assembly, part of the 50S ribosomal subunit.

It is found in the plastid. It localises to the chloroplast. Functionally, binds to 23S rRNA. This Gossypium barbadense (Sea Island cotton) protein is Large ribosomal subunit protein uL23cz/uL23cy (rpl23-A).